The primary structure comprises 506 residues: Maturase K (506 aa).

Belongs to the intron maturase 2 family. MatK subfamily.

The protein resides in the plastid. It localises to the chloroplast. In terms of biological role, usually encoded in the trnK tRNA gene intron. Probably assists in splicing its own and other chloroplast group II introns. The chain is Maturase K from Trifolium microcephalum (Small-head clover).